The sequence spans 93 residues: Islet amyloid polypeptide (93 aa).

An N-terminal signal peptide occupies residues 1-23; that stretch reads MMCISKLPAVLLILSVALNHLRA. Positions 24–35 are excised as a propeptide; it reads TPVRSGSNPQMD. An intrachain disulfide couples C39 to C44. The tract at residues 64–93 is disordered; it reads LPPTNVGSNTYGKRNAAGDPNRESLDFLLV. Y74 is subject to Tyrosine amide. The propeptide occupies 78–93; it reads NAAGDPNRESLDFLLV. The segment covering 83-93 has biased composition (basic and acidic residues); sequence PNRESLDFLLV.

Belongs to the calcitonin family. Can form homodimers. Interacts with IDE and INS. Interaction with INS inhibits homodimerization and fibril formation.

It localises to the secreted. Functionally, amylin/IAPP is a glucoregulatory peptide hormone that plays an important role in the regulation of energy homeostasis. Selectively inhibits insulin-stimulated glucose utilization and glycogen deposition in muscle, while not affecting adipocyte glucose metabolism. IAPP function is mediated by the CALCR-RAMPs (AMYRs) receptor complexes. Amylin can also bind CALCR receptor in the absence of RAMPs, although it is more selective for AMYRs. In Mus musculus (Mouse), this protein is Islet amyloid polypeptide.